The sequence spans 752 residues: DNA topoisomerase 4 subunit A (752 aa).

Residues 31-494 (LPFIGDGLKP…EAKAMSEHDM (464 aa)) form the Topo IIA-type catalytic domain. Y120 serves as the catalytic O-(5'-phospho-DNA)-tyrosine intermediate. 2 disordered regions span residues 472-492 (YGDDRRSPLQEREEAKAMSEH) and 718-752 (TGERGRRGTLMRGLQRIDRVEIDSPRRASSGDSEE). Composition is skewed to basic and acidic residues over residues 473–492 (GDDRRSPLQEREEAKAMSEH) and 732–743 (QRIDRVEIDSPR).

It belongs to the type II topoisomerase GyrA/ParC subunit family. ParC type 1 subfamily. As to quaternary structure, heterotetramer composed of ParC and ParE.

The protein localises to the cell membrane. The enzyme catalyses ATP-dependent breakage, passage and rejoining of double-stranded DNA.. Functionally, topoisomerase IV is essential for chromosome segregation. It relaxes supercoiled DNA. Performs the decatenation events required during the replication of a circular DNA molecule. This Escherichia coli O157:H7 protein is DNA topoisomerase 4 subunit A.